The primary structure comprises 473 residues: Trigger factor (473 aa).

The 88-residue stretch at 174–261 (GDIAVVSFKG…LKDLKEKELP (88 aa)) folds into the PPIase FKBP-type domain. The interval 442 to 473 (ATKLTTKTTTKATTKKGVKTKSKPKVNKKEKN) is disordered. The span at 444–453 (KLTTKTTTKA) shows a compositional bias: low complexity. Residues 454–467 (TTKKGVKTKSKPKV) are compositionally biased toward basic residues.

This sequence belongs to the FKBP-type PPIase family. Tig subfamily.

It localises to the cytoplasm. The enzyme catalyses [protein]-peptidylproline (omega=180) = [protein]-peptidylproline (omega=0). Its function is as follows. Involved in protein export. Acts as a chaperone by maintaining the newly synthesized protein in an open conformation. Functions as a peptidyl-prolyl cis-trans isomerase. This Prochlorococcus marinus subsp. pastoris (strain CCMP1986 / NIES-2087 / MED4) protein is Trigger factor.